The primary structure comprises 321 residues: Outer envelope protein 36, chloroplastic (321 aa).

This sequence belongs to the OEP80 (TC 1.B.33.2) family. Expressed in germinating seeds.

It is found in the plastid. Its subcellular location is the chloroplast outer membrane. May play a role during plastid development. This Arabidopsis thaliana (Mouse-ear cress) protein is Outer envelope protein 36, chloroplastic.